Consider the following 80-residue polypeptide: Putative UPF0377 protein YMR324C (80 aa).

The chain crosses the membrane as a helical span at residues 13–33; it reads ACIFIDSVCEGIVFWGLCLFV.

It belongs to the UPF0377 family.

Its subcellular location is the membrane. The chain is Putative UPF0377 protein YMR324C from Saccharomyces cerevisiae (strain ATCC 204508 / S288c) (Baker's yeast).